Reading from the N-terminus, the 387-residue chain is MGLAKETTMGGRGRVAKVEVQGKKPLSRVPNTKPPFTVGQLKKAIPPHCFQRSLLTSFSYVVYDLSFAFIFYIATTYFHLLPQPFSLIAWPIYWVLQGCLLTGVWVIAHECGHHAFSKYQWVDDVVGLTLHSTLLVPYFSWKISHRRHHSNTGSLDRDEVFVPKPKSKVAWFSKYLNNPLGRAVSLLVTLTIGWPMYLAFNVSGRPYDSFASHYHPYAPIYSNRERLLIYVSDVALFSVTYSLYRVATLKGLVWLLCVYGVPLLIVNGFLVTITYLQHTHFALPHYDSSEWDWLKGALATMDRDYGILNKVFHHITDTHVAHHLFSTMPHYHAMEATNAIKPILGEYYQFDDTPFYKALWREARECLYVEPDEGTSEKGVYWYRNKY.

2 helical membrane-spanning segments follow: residues 54–74 and 87–107; these read LLTSFSYVVYDLSFAFIFYIA and LIAWPIYWVLQGCLLTGVWVI. The Histidine box-1 motif lies at 109 to 113; sequence HECGH. A helical transmembrane segment spans residues 121–141; sequence WVDDVVGLTLHSTLLVPYFSW. A Histidine box-2 motif is present at residues 145–149; the sequence is HRRHH. 3 consecutive transmembrane segments (helical) span residues 183–203, 227–247, and 251–271; these read AVSLLVTLTIGWPMYLAFNVS, LLIYVSDVALFSVTYSLYRVA, and GLVWLLCVYGVPLLIVNGFLV. A Histidine box-3 motif is present at residues 319 to 323; the sequence is HVAHH.

This sequence belongs to the fatty acid desaturase type 1 family. Strongly expressed in developing seeds.

It is found in the endoplasmic reticulum membrane. The protein operates within lipid metabolism; polyunsaturated fatty acid biosynthesis. ER (microsomal) omega-6 fatty acid desaturase introduces the second double bond in the biosynthesis of 18:3 fatty acids, important constituents of plant membranes. It is thought to use cytochrome b5 as an electron donor and to act on fatty acids esterified to phosphatidylcholine and, possibly, other phospholipids. This chain is Omega-6 fatty acid desaturase, endoplasmic reticulum isozyme 1 (FAD2-1), found in Glycine max (Soybean).